We begin with the raw amino-acid sequence, 154 residues long: Endoribonuclease YbeY (154 aa).

Residues His114, His118, and His124 each contribute to the Zn(2+) site.

The protein belongs to the endoribonuclease YbeY family. Zn(2+) serves as cofactor.

Its subcellular location is the cytoplasm. In terms of biological role, single strand-specific metallo-endoribonuclease involved in late-stage 70S ribosome quality control and in maturation of the 3' terminus of the 16S rRNA. The chain is Endoribonuclease YbeY from Haemophilus influenzae (strain 86-028NP).